Here is a 146-residue protein sequence, read N- to C-terminus: Phospholipase A2 PS22 (146 aa).

The signal sequence occupies residues 1 to 19; the sequence is MYPAHLLVLLAVCVSLLGA. Positions 20-27 are excised as a propeptide; it reads ASVPPQPL. 7 cysteine pairs are disulfide-bonded: Cys38/Cys98, Cys54/Cys145, Cys56/Cys72, Cys71/Cys126, Cys78/Cys119, Cys87/Cys112, and Cys105/Cys117. Positions 55, 57, and 59 each coordinate Ca(2+). His75 is an active-site residue. Residue Asp76 participates in Ca(2+) binding. The active site involves Asp120.

This sequence belongs to the phospholipase A2 family. Group I subfamily. D49 sub-subfamily. Ca(2+) serves as cofactor. In terms of tissue distribution, expressed by the venom gland.

It localises to the secreted. It catalyses the reaction a 1,2-diacyl-sn-glycero-3-phosphocholine + H2O = a 1-acyl-sn-glycero-3-phosphocholine + a fatty acid + H(+). Its function is as follows. Snake venom phospholipase A2 (PLA2) that inhibits collagen-induced platelet aggregation. PLA2 catalyzes the calcium-dependent hydrolysis of the 2-acyl groups in 3-sn-phosphoglycerides. The chain is Phospholipase A2 PS22 from Drysdalia coronoides (White-lipped snake).